The primary structure comprises 201 residues: Potassium-transporting ATPase KdpC subunit (201 aa).

Residues 17-37 (LLTGLAYPLAMTGLAGILFPV) form a helical membrane-spanning segment.

The protein belongs to the KdpC family. In terms of assembly, the system is composed of three essential subunits: KdpA, KdpB and KdpC.

The protein localises to the cell inner membrane. In terms of biological role, part of the high-affinity ATP-driven potassium transport (or Kdp) system, which catalyzes the hydrolysis of ATP coupled with the electrogenic transport of potassium into the cytoplasm. This subunit acts as a catalytic chaperone that increases the ATP-binding affinity of the ATP-hydrolyzing subunit KdpB by the formation of a transient KdpB/KdpC/ATP ternary complex. The chain is Potassium-transporting ATPase KdpC subunit from Methylobacterium nodulans (strain LMG 21967 / CNCM I-2342 / ORS 2060).